The sequence spans 533 residues: Bifunctional purine biosynthesis protein PurH (533 aa).

One can recognise an MGS-like domain in the interval 1–148; that stretch reads MQPNRPIRQA…KNHQDVAIVV (148 aa).

Belongs to the PurH family.

It catalyses the reaction (6R)-10-formyltetrahydrofolate + 5-amino-1-(5-phospho-beta-D-ribosyl)imidazole-4-carboxamide = 5-formamido-1-(5-phospho-D-ribosyl)imidazole-4-carboxamide + (6S)-5,6,7,8-tetrahydrofolate. The enzyme catalyses IMP + H2O = 5-formamido-1-(5-phospho-D-ribosyl)imidazole-4-carboxamide. It participates in purine metabolism; IMP biosynthesis via de novo pathway; 5-formamido-1-(5-phospho-D-ribosyl)imidazole-4-carboxamide from 5-amino-1-(5-phospho-D-ribosyl)imidazole-4-carboxamide (10-formyl THF route): step 1/1. The protein operates within purine metabolism; IMP biosynthesis via de novo pathway; IMP from 5-formamido-1-(5-phospho-D-ribosyl)imidazole-4-carboxamide: step 1/1. The protein is Bifunctional purine biosynthesis protein PurH of Pasteurella multocida (strain Pm70).